The chain runs to 313 residues: 3'-5' exoribonuclease YhaM (313 aa).

The HD domain maps to 163 to 279 (HVVSMLRLAK…LHQIDLMDAS (117 aa)).

The protein belongs to the YhaM family.

Shows a 3'-5' exoribonuclease activity. In Listeria welshimeri serovar 6b (strain ATCC 35897 / DSM 20650 / CCUG 15529 / CIP 8149 / NCTC 11857 / SLCC 5334 / V8), this protein is 3'-5' exoribonuclease YhaM.